We begin with the raw amino-acid sequence, 428 residues long: Leucine-rich repeat-containing protein 42 (428 aa).

LRR repeat units follow at residues 149–170, 174–195, 202–222, 234–255, and 259–280; these read VLCS…EEIK, ELTC…LEHL, SVTQ…RKMT, NLTL…GYLF, and KLNC…KHKL. The tract at residues 379–412 is disordered; the sequence is KHEAISSQESKKSKKRPFEESETEQNNSSQPSKQ. A phosphoserine mark is found at Ser406 and Ser407.

Belongs to the LRRC42 family.

The chain is Leucine-rich repeat-containing protein 42 (LRRC42) from Homo sapiens (Human).